We begin with the raw amino-acid sequence, 386 residues long: Ribonucleoside-diphosphate reductase subunit M2 (386 aa).

A Phosphoserine modification is found at serine 20. A Phosphothreonine modification is found at threonine 33. The Cy signature appears at 49–51 (RRI). The Fe cation site is built by aspartate 139, glutamate 170, and histidine 173. Tyrosine 177 is a catalytic residue. The Fe cation site is built by glutamate 233, glutamate 267, and histidine 270.

It belongs to the ribonucleoside diphosphate reductase small chain family. As to quaternary structure, heterodimer of a large and a small subunit. Interacts (via Cy motif and when phosphorylated at Thr-33) with CCNF; the interaction occurs exclusively in G2 and early M. Fe cation is required as a cofactor. In terms of processing, phosphorylation on Ser-20 relieves the inhibitory effect on Wnt signaling. Phosphorylated on Thr-33 by CDK1 and CDK2; predominantly in G2 and M phase. Post-translationally, ubiquitinated by the SCF(CCNF) E3 ubiquitin-protein ligase complex; leading to its degradation by the proteasome.

It localises to the cytoplasm. Its subcellular location is the nucleus. It catalyses the reaction a 2'-deoxyribonucleoside 5'-diphosphate + [thioredoxin]-disulfide + H2O = a ribonucleoside 5'-diphosphate + [thioredoxin]-dithiol. Provides the precursors necessary for DNA synthesis. Catalyzes the biosynthesis of deoxyribonucleotides from the corresponding ribonucleotides. Inhibits Wnt signaling. The protein is Ribonucleoside-diphosphate reductase subunit M2 (RRM2) of Mesocricetus auratus (Golden hamster).